The following is a 102-amino-acid chain: MAGQKIRIRLKAYDHEVIDSSAKKIVETVTRTGASVAGPVPLPTEKNVYCVIKSPHKYKDSREHFEMRTHKRLIDILDPTPKTVDSLMRLDLPAGVDIEIKL.

This sequence belongs to the universal ribosomal protein uS10 family. As to quaternary structure, part of the 30S ribosomal subunit.

Functionally, involved in the binding of tRNA to the ribosomes. This is Small ribosomal subunit protein uS10 from Streptomyces griseus subsp. griseus (strain JCM 4626 / CBS 651.72 / NBRC 13350 / KCC S-0626 / ISP 5235).